The primary structure comprises 133 residues: Protein FwdD (133 aa).

This chain is Protein FwdD (fwdD), found in Methanocaldococcus jannaschii (strain ATCC 43067 / DSM 2661 / JAL-1 / JCM 10045 / NBRC 100440) (Methanococcus jannaschii).